The primary structure comprises 912 residues: Coiled-coil domain-containing protein 162 (912 aa).

Coiled-coil stretches lie at residues 1-35 and 220-276; these read MFKS…FSFA and VLLG…VVMS.

This Mus musculus (Mouse) protein is Coiled-coil domain-containing protein 162.